A 173-amino-acid chain; its full sequence is Signal peptidase complex catalytic subunit sec11 (173 aa).

Topologically, residues 1 to 15 are cytoplasmic; it reads MLGIADMQPRQLAAQ. Residues 16 to 36 traverse the membrane as a helical; Signal-anchor for type II membrane protein segment; sequence ILNFALVLSTAFMMWKGLSVV. The Lumenal segment spans residues 37–173; it reads SDSPSPIVVV…MGVMVVLQRE (137 aa). Active-site charge relay system residues include serine 50, histidine 89, and aspartate 115. Residues 159–170 are C-terminal short (CTS) helix; sequence VMLGLMGVMVVL.

The protein belongs to the peptidase S26B family. As to quaternary structure, component of the signal peptidase complex (SPC) composed of a catalytic subunit SEC11 and three accessory subunits SPC1, SPC2 and SPC3. The complex induces a local thinning of the ER membrane which is used to measure the length of the signal peptide (SP) h-region of protein substrates. This ensures the selectivity of the complex towards h-regions shorter than 18-20 amino acids. SPC associates with the translocon complex.

It is found in the endoplasmic reticulum membrane. It catalyses the reaction Cleavage of hydrophobic, N-terminal signal or leader sequences from secreted and periplasmic proteins.. In terms of biological role, catalytic component of the signal peptidase complex (SPC) which catalyzes the cleavage of N-terminal signal sequences from nascent proteins as they are translocated into the lumen of the endoplasmic reticulum. Specifically cleaves N-terminal signal peptides that contain a hydrophobic alpha-helix (h-region) shorter than 18-20 amino acids. In Pyrenophora tritici-repentis (strain Pt-1C-BFP) (Wheat tan spot fungus), this protein is Signal peptidase complex catalytic subunit sec11 (sec11).